The chain runs to 607 residues: Elongation factor 4 (607 aa).

Residues 11–193 enclose the tr-type G domain; sequence GKIRNFSIIA…QIVEKVPAPT (183 aa). GTP is bound by residues 23–28 and 140–143; these read DHGKST and NKID.

This sequence belongs to the TRAFAC class translation factor GTPase superfamily. Classic translation factor GTPase family. LepA subfamily.

The protein resides in the cell membrane. The enzyme catalyses GTP + H2O = GDP + phosphate + H(+). In terms of biological role, required for accurate and efficient protein synthesis under certain stress conditions. May act as a fidelity factor of the translation reaction, by catalyzing a one-codon backward translocation of tRNAs on improperly translocated ribosomes. Back-translocation proceeds from a post-translocation (POST) complex to a pre-translocation (PRE) complex, thus giving elongation factor G a second chance to translocate the tRNAs correctly. Binds to ribosomes in a GTP-dependent manner. The protein is Elongation factor 4 of Streptococcus pneumoniae (strain Taiwan19F-14).